Consider the following 487-residue polypeptide: GTPase Der (487 aa).

2 EngA-type G domains span residues 3-166 and 199-372; these read PVVA…AEAM and IKLA…DSAT. GTP is bound by residues 9-16, 56-60, 118-121, 205-212, 252-256, and 317-320; these read GRPNVGKS, DTGGI, NKID, GKPNVGKS, DTAGV, and NKWD. The KH-like domain maps to 373-457; it reads RRVSTSMLTR…PIQLRFQEGD (85 aa).

It belongs to the TRAFAC class TrmE-Era-EngA-EngB-Septin-like GTPase superfamily. EngA (Der) GTPase family. In terms of assembly, associates with the 50S ribosomal subunit.

Its function is as follows. GTPase that plays an essential role in the late steps of ribosome biogenesis. This Shewanella oneidensis (strain ATCC 700550 / JCM 31522 / CIP 106686 / LMG 19005 / NCIMB 14063 / MR-1) protein is GTPase Der.